A 265-amino-acid chain; its full sequence is Thiazole synthase (265 aa).

Residue K103 is the Schiff-base intermediate with DXP of the active site. 1-deoxy-D-xylulose 5-phosphate is bound by residues G164, 190 to 191, and 212 to 213; these read AG and NT.

It belongs to the ThiG family. As to quaternary structure, homotetramer. Forms heterodimers with either ThiH or ThiS.

It localises to the cytoplasm. It catalyses the reaction [ThiS sulfur-carrier protein]-C-terminal-Gly-aminoethanethioate + 2-iminoacetate + 1-deoxy-D-xylulose 5-phosphate = [ThiS sulfur-carrier protein]-C-terminal Gly-Gly + 2-[(2R,5Z)-2-carboxy-4-methylthiazol-5(2H)-ylidene]ethyl phosphate + 2 H2O + H(+). The protein operates within cofactor biosynthesis; thiamine diphosphate biosynthesis. In terms of biological role, catalyzes the rearrangement of 1-deoxy-D-xylulose 5-phosphate (DXP) to produce the thiazole phosphate moiety of thiamine. Sulfur is provided by the thiocarboxylate moiety of the carrier protein ThiS. In vitro, sulfur can be provided by H(2)S. The protein is Thiazole synthase of Bordetella avium (strain 197N).